The following is a 288-amino-acid chain: ATP synthase gamma chain (288 aa).

The protein belongs to the ATPase gamma chain family. As to quaternary structure, F-type ATPases have 2 components, CF(1) - the catalytic core - and CF(0) - the membrane proton channel. CF(1) has five subunits: alpha(3), beta(3), gamma(1), delta(1), epsilon(1). CF(0) has three main subunits: a, b and c.

It localises to the cell inner membrane. In terms of biological role, produces ATP from ADP in the presence of a proton gradient across the membrane. The gamma chain is believed to be important in regulating ATPase activity and the flow of protons through the CF(0) complex. The polypeptide is ATP synthase gamma chain (Aliivibrio salmonicida (strain LFI1238) (Vibrio salmonicida (strain LFI1238))).